Consider the following 96-residue polypeptide: Large ribosomal subunit protein uL15 (96 aa).

The protein belongs to the universal ribosomal protein uL15 family. Part of the 50S ribosomal subunit.

In terms of biological role, binds to the 23S rRNA. This chain is Large ribosomal subunit protein uL15 (rplO), found in Streptomyces scabiei.